The following is a 204-amino-acid chain: 3,4-dihydroxy-2-butanone 4-phosphate synthase (204 aa).

Glu27 contacts Mg(2+). Asp31 is a binding site for D-ribulose 5-phosphate. Cys56 carries the S-glutathionyl cysteine modification. D-ribulose 5-phosphate-binding positions include Thr82 and 140-144 (RDGHT). His143 contacts Mg(2+).

It belongs to the DHBP synthase family. In terms of assembly, homodimer. The cofactor is Mg(2+). It depends on Mn(2+) as a cofactor. Post-translationally, S-glutathionylation is reversible and dependent on a glutaredoxin.

The enzyme catalyses D-ribulose 5-phosphate = (2S)-2-hydroxy-3-oxobutyl phosphate + formate + H(+). The protein operates within cofactor biosynthesis; riboflavin biosynthesis; 2-hydroxy-3-oxobutyl phosphate from D-ribulose 5-phosphate: step 1/1. Functionally, catalyzes the conversion of D-ribulose 5-phosphate to formate and 3,4-dihydroxy-2-butanone 4-phosphate. This is 3,4-dihydroxy-2-butanone 4-phosphate synthase from Schizosaccharomyces pombe (strain 972 / ATCC 24843) (Fission yeast).